The chain runs to 445 residues: Transcription termination factor MTERF15, mitochondrial (445 aa).

The transit peptide at 1–25 (MASKLKTFINLRDYPITLFNQIRSL) directs the protein to the mitochondrion.

It belongs to the mTERF family.

It is found in the mitochondrion. Transcription termination factor required for mitochondrial NAD2 intron 3 splicing and normal membrane respiratory chain Complex I activity. Essential for normal plant growth and development. Binds to RNA but not to double-stranded DNA. The polypeptide is Transcription termination factor MTERF15, mitochondrial (Arabidopsis thaliana (Mouse-ear cress)).